The chain runs to 122 residues: Prefoldin subunit 1 (122 aa).

Position 2 is an N-acetylalanine (alanine 2).

The protein belongs to the prefoldin subunit beta family. In terms of assembly, heterohexamer of two PFD-alpha type and four PFD-beta type subunits.

Its function is as follows. Binds specifically to cytosolic chaperonin (c-CPN) and transfers target proteins to it. Binds to nascent polypeptide chain and promotes folding in an environment in which there are many competing pathways for nonnative proteins. The chain is Prefoldin subunit 1 (PFDN1) from Homo sapiens (Human).